A 211-amino-acid polypeptide reads, in one-letter code: Adenylate kinase (211 aa).

10–15 contributes to the ATP binding site; that stretch reads GSGKGT. An NMP region spans residues 30–59; sequence STGDLFRENILNSTALGQEIKKIVERGELV. AMP contacts are provided by residues Thr-31, Arg-36, 57 to 59, 85 to 88, and Gln-92; these read ELV and GFPR. An LID region spans residues 121 to 158; the sequence is GRRICKSCNNIFNIYTLTTKKNGICDVCGGDLYQREDD. Arg-122 lines the ATP pocket. Zn(2+) is bound by residues Cys-125 and Cys-128. 131–132 provides a ligand contact to ATP; sequence IF. Residues Cys-145 and Cys-148 each contribute to the Zn(2+) site. Residues Arg-155 and Arg-166 each coordinate AMP. Val-194 lines the ATP pocket.

This sequence belongs to the adenylate kinase family. As to quaternary structure, monomer.

The protein localises to the cytoplasm. The catalysed reaction is AMP + ATP = 2 ADP. It functions in the pathway purine metabolism; AMP biosynthesis via salvage pathway; AMP from ADP: step 1/1. Its function is as follows. Catalyzes the reversible transfer of the terminal phosphate group between ATP and AMP. Plays an important role in cellular energy homeostasis and in adenine nucleotide metabolism. The protein is Adenylate kinase of Borreliella burgdorferi (strain ATCC 35210 / DSM 4680 / CIP 102532 / B31) (Borrelia burgdorferi).